Here is a 234-residue protein sequence, read N- to C-terminus: UPF0758 protein STH371 (234 aa).

In terms of domain architecture, MPN spans 110–232 (DLCNPRAVFE…YTSFRERGLL (123 aa)). Positions 181, 183, and 194 each coordinate Zn(2+). The JAMM motif motif lies at 181–194 (HNHPSGDPTPSRED).

Belongs to the UPF0758 family.

The chain is UPF0758 protein STH371 from Symbiobacterium thermophilum (strain DSM 24528 / JCM 14929 / IAM 14863 / T).